A 151-amino-acid polypeptide reads, in one-letter code: Small ribosomal subunit protein bS6 (151 aa).

The disordered stretch occupies residues 97 to 151 (EAEPSAMMQKRDRDDRKDRDRGDRPRRRDDDFGGGDRGDRGDRGDRPERNFGGEN). The segment covering 105 to 151 (QKRDRDDRKDRDRGDRPRRRDDDFGGGDRGDRGDRGDRPERNFGGEN) has biased composition (basic and acidic residues).

Belongs to the bacterial ribosomal protein bS6 family.

Its function is as follows. Binds together with bS18 to 16S ribosomal RNA. This chain is Small ribosomal subunit protein bS6, found in Methylorubrum populi (strain ATCC BAA-705 / NCIMB 13946 / BJ001) (Methylobacterium populi).